The sequence spans 339 residues: Phenylalanine--tRNA ligase alpha subunit (339 aa).

Glutamate 254 provides a ligand contact to Mg(2+).

This sequence belongs to the class-II aminoacyl-tRNA synthetase family. Phe-tRNA synthetase alpha subunit type 1 subfamily. Tetramer of two alpha and two beta subunits. Mg(2+) serves as cofactor.

The protein localises to the cytoplasm. The catalysed reaction is tRNA(Phe) + L-phenylalanine + ATP = L-phenylalanyl-tRNA(Phe) + AMP + diphosphate + H(+). In Clostridium novyi (strain NT), this protein is Phenylalanine--tRNA ligase alpha subunit.